The primary structure comprises 249 residues: Leucyl/phenylalanyl-tRNA--protein transferase (249 aa).

Positions 1 to 21 (MSRTLPHLLSPDPASPFPPAE) are disordered.

The protein belongs to the L/F-transferase family.

The protein localises to the cytoplasm. The enzyme catalyses N-terminal L-lysyl-[protein] + L-leucyl-tRNA(Leu) = N-terminal L-leucyl-L-lysyl-[protein] + tRNA(Leu) + H(+). The catalysed reaction is N-terminal L-arginyl-[protein] + L-leucyl-tRNA(Leu) = N-terminal L-leucyl-L-arginyl-[protein] + tRNA(Leu) + H(+). It catalyses the reaction L-phenylalanyl-tRNA(Phe) + an N-terminal L-alpha-aminoacyl-[protein] = an N-terminal L-phenylalanyl-L-alpha-aminoacyl-[protein] + tRNA(Phe). Its function is as follows. Functions in the N-end rule pathway of protein degradation where it conjugates Leu, Phe and, less efficiently, Met from aminoacyl-tRNAs to the N-termini of proteins containing an N-terminal arginine or lysine. The sequence is that of Leucyl/phenylalanyl-tRNA--protein transferase from Xanthomonas campestris pv. campestris (strain B100).